The chain runs to 271 residues: Putative phosphoenolpyruvate synthase regulatory protein (271 aa).

ADP is bound at residue 151 to 158; that stretch reads GVSRSGKT.

Belongs to the pyruvate, phosphate/water dikinase regulatory protein family. PSRP subfamily.

The enzyme catalyses [pyruvate, water dikinase] + ADP = [pyruvate, water dikinase]-phosphate + AMP + H(+). It carries out the reaction [pyruvate, water dikinase]-phosphate + phosphate + H(+) = [pyruvate, water dikinase] + diphosphate. Functionally, bifunctional serine/threonine kinase and phosphorylase involved in the regulation of the phosphoenolpyruvate synthase (PEPS) by catalyzing its phosphorylation/dephosphorylation. The chain is Putative phosphoenolpyruvate synthase regulatory protein from Burkholderia lata (strain ATCC 17760 / DSM 23089 / LMG 22485 / NCIMB 9086 / R18194 / 383).